We begin with the raw amino-acid sequence, 194 residues long: Ion-translocating oxidoreductase complex subunit A (194 aa).

Helical transmembrane passes span 1–21 (MVMH…FILV), 48–68 (CVIV…LIPF), 73–93 (LCTM…EIIV), 103–123 (LLGI…IPLM), 135–155 (VLYG…FSSI), and 172–192 (PIAL…DGLI).

It belongs to the NqrDE/RnfAE family. In terms of assembly, the complex is composed of six subunits: RnfA, RnfB, RnfC, RnfD, RnfE and RnfG.

It is found in the cell inner membrane. Part of a membrane-bound complex that couples electron transfer with translocation of ions across the membrane. This chain is Ion-translocating oxidoreductase complex subunit A, found in Buchnera aphidicola subsp. Baizongia pistaciae (strain Bp).